We begin with the raw amino-acid sequence, 245 residues long: Phosphoadenosine 5'-phosphosulfate reductase (245 aa).

Residue C239 is the Nucleophile; cysteine thiosulfonate intermediate of the active site.

The protein belongs to the PAPS reductase family. CysH subfamily.

The protein resides in the cytoplasm. The catalysed reaction is [thioredoxin]-disulfide + sulfite + adenosine 3',5'-bisphosphate + 2 H(+) = [thioredoxin]-dithiol + 3'-phosphoadenylyl sulfate. It functions in the pathway sulfur metabolism; hydrogen sulfide biosynthesis; sulfite from sulfate: step 3/3. Functionally, catalyzes the formation of sulfite from phosphoadenosine 5'-phosphosulfate (PAPS) using thioredoxin as an electron donor. This is Phosphoadenosine 5'-phosphosulfate reductase from Baumannia cicadellinicola subsp. Homalodisca coagulata.